A 270-amino-acid polypeptide reads, in one-letter code: Putative phosphoenolpyruvate synthase regulatory protein (270 aa).

ADP is bound at residue 150-157 (GVSRCGKT).

It belongs to the pyruvate, phosphate/water dikinase regulatory protein family. PSRP subfamily.

The enzyme catalyses [pyruvate, water dikinase] + ADP = [pyruvate, water dikinase]-phosphate + AMP + H(+). The catalysed reaction is [pyruvate, water dikinase]-phosphate + phosphate + H(+) = [pyruvate, water dikinase] + diphosphate. Bifunctional serine/threonine kinase and phosphorylase involved in the regulation of the phosphoenolpyruvate synthase (PEPS) by catalyzing its phosphorylation/dephosphorylation. This Shewanella pealeana (strain ATCC 700345 / ANG-SQ1) protein is Putative phosphoenolpyruvate synthase regulatory protein.